Consider the following 129-residue polypeptide: Phosphoribosyl-AMP cyclohydrolase (129 aa).

Asp-76 is a binding site for Mg(2+). Position 77 (Cys-77) interacts with Zn(2+). 2 residues coordinate Mg(2+): Asp-78 and Asp-80. Zn(2+)-binding residues include Cys-97 and Cys-104.

It belongs to the PRA-CH family. In terms of assembly, homodimer. It depends on Mg(2+) as a cofactor. The cofactor is Zn(2+).

Its subcellular location is the cytoplasm. The enzyme catalyses 1-(5-phospho-beta-D-ribosyl)-5'-AMP + H2O = 1-(5-phospho-beta-D-ribosyl)-5-[(5-phospho-beta-D-ribosylamino)methylideneamino]imidazole-4-carboxamide. Its pathway is amino-acid biosynthesis; L-histidine biosynthesis; L-histidine from 5-phospho-alpha-D-ribose 1-diphosphate: step 3/9. Its function is as follows. Catalyzes the hydrolysis of the adenine ring of phosphoribosyl-AMP. This chain is Phosphoribosyl-AMP cyclohydrolase, found in Methylibium petroleiphilum (strain ATCC BAA-1232 / LMG 22953 / PM1).